A 289-amino-acid chain; its full sequence is ATP synthase gamma chain (289 aa).

It belongs to the ATPase gamma chain family. F-type ATPases have 2 components, CF(1) - the catalytic core - and CF(0) - the membrane proton channel. CF(1) has five subunits: alpha(3), beta(3), gamma(1), delta(1), epsilon(1). CF(0) has three main subunits: a, b and c.

It is found in the cell inner membrane. Its function is as follows. Produces ATP from ADP in the presence of a proton gradient across the membrane. The gamma chain is believed to be important in regulating ATPase activity and the flow of protons through the CF(0) complex. The protein is ATP synthase gamma chain of Dichelobacter nodosus (strain VCS1703A).